Here is a 478-residue protein sequence, read N- to C-terminus: 2,5-dioxopentanoate dehydrogenase (478 aa).

Residues 148–149, 172–175, and 225–226 contribute to the NADP(+) site; these read WN, KPAT, and GS. Glu249 serves as the catalytic Proton acceptor. Cys283 (nucleophile) is an active-site residue. NADP(+) is bound at residue Glu379.

It belongs to the aldehyde dehydrogenase family. As to quaternary structure, homotetramer.

It catalyses the reaction 2,5-dioxopentanoate + NADP(+) + H2O = 2-oxoglutarate + NADPH + 2 H(+). Its function is as follows. 2,5-dioxopentanoate dehydrogenase involved in the degradation of pentoses such as D-arabinose or D-xylose, a major component of hemicelluloses such as xylan. Catalyzes the fifth reaction in the pentose utilization pathway through dehydratation of 2,5-dioxopentanoate into 2-oxoglutarate. Also shows dehydrogenase activity toward glycolaldehyde and DL-glyceraldehyde. This is 2,5-dioxopentanoate dehydrogenase from Saccharolobus solfataricus (strain ATCC 35092 / DSM 1617 / JCM 11322 / P2) (Sulfolobus solfataricus).